We begin with the raw amino-acid sequence, 292 residues long: RNA 5'-monophosphate methyltransferase (292 aa).

Positions Met1 to Glu20 are disordered. S-adenosyl-L-methionine contacts are provided by residues Arg46, Asn76, Asp110, Asp135 to Phe136, and Met164. Positions Glu53–Pro274 constitute a Bin3-type SAM domain.

This sequence belongs to the methyltransferase superfamily. As to quaternary structure, interacts with DICER1; the interaction may be mediated by RNA.

It localises to the cytoplasm. It carries out the reaction a 5'-end 5'-phospho-ribonucleoside-RNA + S-adenosyl-L-methionine = a 5'-end (5'-methylphospho)-ribonucleoside-RNA + S-adenosyl-L-homocysteine. It catalyses the reaction a 5'-end 5'-phospho-ribonucleoside-RNA + 2 S-adenosyl-L-methionine = a 5'-end (5'-bismethylphospho)-ribonucleoside-RNA + 2 S-adenosyl-L-homocysteine. O-methyltransferase that specifically monomethylates 5'-monophosphate of cytoplasmic histidyl tRNA (tRNA(His)), acting as a capping enzyme by protecting tRNA(His) from cleavage by DICER1. Also able, with less efficiently, to methylate the 5' monophosphate of a subset of pre-miRNAs, acting as a negative regulator of miRNA processing. The 5' monophosphate of pre-miRNAs is recognized by DICER1 and is required for pre-miRNAs processing: methylation at this position reduces the processing of pre-miRNAs by DICER1. Was also reported to mediate dimethylation of pre-miR-145; however dimethylation cannot be reproduced by another group which observes a monomethylation of pre-miR-145. The protein is RNA 5'-monophosphate methyltransferase (BCDIN3D) of Pongo abelii (Sumatran orangutan).